Here is a 116-residue protein sequence, read N- to C-terminus: UPF0499 protein ATEG_06693 (116 aa).

An N-terminal signal peptide occupies residues 1-18; it reads MKLTGLLSLALLTTLALA. 3 disulfide bridges follow: C32/C46, C36/C49, and C42/C54.

It belongs to the UPF0499 family.

Its subcellular location is the secreted. The chain is UPF0499 protein ATEG_06693 from Aspergillus terreus (strain NIH 2624 / FGSC A1156).